A 267-amino-acid chain; its full sequence is 26S proteasome non-ATPase regulatory subunit 8 homolog A (267 aa).

N-acetylmethionine is present on Met1. A PCI domain is found at 79-251; it reads DAFERDFFQL…APCKEIPSLQ (173 aa).

It belongs to the proteasome subunit S14 family. Component of the 19S regulatory particle (RP/PA700) lid subcomplex of the 26S proteasome. The 26S proteasome is composed of a core protease (CP), known as the 20S proteasome, capped at one or both ends by the 19S regulatory particle (RP/PA700). The RP/PA700 complex is composed of at least 17 different subunits in two subcomplexes, the base and the lid, which form the portions proximal and distal to the 20S proteolytic core, respectively. Interacts with PUB22 and PUB23. Binds to the translation initiation factors TIF3E1. Interacts with UCH1 and UCH2. Ubiquitinated by PUB22 and PUB23. Ubiquitous with highest expression in flowers.

In terms of biological role, acts as a regulatory subunit of the 26S proteasome which is involved in the ATP-dependent degradation of ubiquitinated proteins. May help to control the degradation of one or more factors that repress cytokinin signaling. Plays an important role for balancing cell expansion with cell proliferation rates during shoot development. The polypeptide is 26S proteasome non-ATPase regulatory subunit 8 homolog A (Arabidopsis thaliana (Mouse-ear cress)).